The sequence spans 206 residues: Small ribosomal subunit protein uS4 (206 aa).

Residues 96–157 (SRLDNVVYRM…KAKNQARIQN (62 aa)) form the S4 RNA-binding domain.

It belongs to the universal ribosomal protein uS4 family. In terms of assembly, part of the 30S ribosomal subunit. Contacts protein S5. The interaction surface between S4 and S5 is involved in control of translational fidelity.

In terms of biological role, one of the primary rRNA binding proteins, it binds directly to 16S rRNA where it nucleates assembly of the body of the 30S subunit. With S5 and S12 plays an important role in translational accuracy. This Chromohalobacter salexigens (strain ATCC BAA-138 / DSM 3043 / CIP 106854 / NCIMB 13768 / 1H11) protein is Small ribosomal subunit protein uS4.